Here is a 104-residue protein sequence, read N- to C-terminus: Large ribosomal subunit protein eL42 (104 aa).

This sequence belongs to the eukaryotic ribosomal protein eL42 family. In terms of assembly, component of the large ribosomal subunit. Mature ribosomes consist of a small (40S) and a large (60S) subunit. The 40S subunit contains about 32 different proteins and 1 molecule of RNA (18S). The 60S subunit contains about 42 different proteins and 3 molecules of RNA (28S, 5.8S and 5S).

The protein resides in the cytoplasm. Functionally, component of the ribosome, a large ribonucleoprotein complex responsible for the synthesis of proteins in the cell. The small ribosomal subunit (SSU) binds messenger RNAs (mRNAs) and translates the encoded message by selecting cognate aminoacyl-transfer RNA (tRNA) molecules. The large subunit (LSU) contains the ribosomal catalytic site termed the peptidyl transferase center (PTC), which catalyzes the formation of peptide bonds, thereby polymerizing the amino acids delivered by tRNAs into a polypeptide chain. The nascent polypeptides leave the ribosome through a tunnel in the LSU and interact with protein factors that function in enzymatic processing, targeting, and the membrane insertion of nascent chains at the exit of the ribosomal tunnel. In Plasmodium falciparum (isolate 3D7), this protein is Large ribosomal subunit protein eL42.